A 70-amino-acid polypeptide reads, in one-letter code: Phycocyanin-645 alpha-2 chain (70 aa).

(2R,3E)-phycocyanobilin is bound at residue Arg16. Mesobiliverdin is bound by residues Cys18, Tyr26, and Lys41.

It belongs to the phycoerythrin family. In terms of assembly, heterotetramer of 2 different alpha chains and 2 identical beta chains which form 2 alpha-beta heterodimers within the heterotetramer. In terms of processing, contains one phycocyanobilin chromophore, one mesobiliverdin chromophore and one 15,16-dihydrobiliverdin chromophore with binding mediated by both the alpha and beta subunits.

It localises to the plastid. Its subcellular location is the chloroplast thylakoid membrane. In terms of biological role, light-harvesting photosynthetic tetrapyrrole chromophore-protein from the phycobiliprotein complex. The sequence is that of Phycocyanin-645 alpha-2 chain from Chroomonas sp.